The primary structure comprises 507 residues: Beta-Ala-His dipeptidase (507 aa).

An N-terminal signal peptide occupies residues Met1–Ser26. Position 132 (His132) interacts with Zn(2+). Asp134 is an active-site residue. Asp165 provides a ligand contact to Zn(2+). The active-site Proton acceptor is Glu199. Glu200 lines the Zn(2+) pocket. Phosphoserine is present on Ser219. Zn(2+) is bound at residue Asp228. 2 N-linked (GlcNAc...) asparagine glycosylation sites follow: Asn322 and Asn382. Zn(2+) is bound at residue His478.

It belongs to the peptidase M20A family. As to quaternary structure, homodimer. Zn(2+) serves as cofactor. As to expression, found in serum and adult nervous central system. Absent in serum from patients with homocarnosinosis.

Its subcellular location is the secreted. The catalysed reaction is Preferential hydrolysis of the beta-Ala-|-His dipeptide (carnosine), and also anserine, Xaa-|-His dipeptides and other dipeptides including homocarnosine.. The enzyme catalyses carnosine + H2O = beta-alanine + L-histidine. It catalyses the reaction anserine + H2O = N(pros)-methyl-L-histidine + beta-alanine. It carries out the reaction L-alanyl-L-histidine + H2O = L-histidine + L-alanine. The catalysed reaction is glycyl-L-histidine + H2O = L-histidine + glycine. The enzyme catalyses L-homocarnosine + H2O = 4-aminobutanoate + L-histidine. With respect to regulation, activated by cadmium ions. Inhibited by the metal chelator 1,10-o-phenantrolin. The inhibitory concentration 50% (IC(50)) is 5 uM. In terms of biological role, catalyzes the peptide bond hydrolysis in Xaa-His dipeptides, displaying the highest activity toward carnosine (beta-alanyl-L-histidine) and anserine (beta-alanyl-3-methyl-histidine). This is Beta-Ala-His dipeptidase from Homo sapiens (Human).